The sequence spans 437 residues: Elongation factor 1-gamma (437 aa).

Position 2 is an N-acetylalanine (Ala2). The GST N-terminal domain occupies Ala2–Ser87. The GST C-terminal domain occupies Thr88–Phe216. N6-acetyllysine is present on residues Lys147 and Lys212. Residues Phe221–Ala254 are compositionally biased toward basic and acidic residues. The tract at residues Phe221 to Gln268 is disordered. Lys253 participates in a covalent cross-link: Glycyl lysine isopeptide (Lys-Gly) (interchain with G-Cter in SUMO1). Positions Ala276–Lys437 constitute an EF-1-gamma C-terminal domain. Lys285 is covalently cross-linked (Glycyl lysine isopeptide (Lys-Gly) (interchain with G-Cter in SUMO2)). N6-acetyllysine is present on Lys401. Lys434 bears the N6-acetyllysine; alternate mark. Position 434 is an N6-malonyllysine; alternate (Lys434).

As to quaternary structure, EF-1 is composed of four subunits: alpha, beta, delta, and gamma.

Functionally, probably plays a role in anchoring the complex to other cellular components. In Rattus norvegicus (Rat), this protein is Elongation factor 1-gamma (Eef1g).